Consider the following 561-residue polypeptide: Guanine nucleotide-binding protein-like 3 (561 aa).

Positions 28–46 (HNRKLKKAAKKQGISRKAK) are enriched in basic residues. Disordered stretches follow at residues 28–58 (HNRKLKKAAKKQGISRKAKKDIGVPNSAPFK) and 76–110 (KEQNKIVKQQEKAAKRKKEKDAASSVKEPAAKKAK). Positions 53–98 (NSAPFKEEVLREAEQRKQELETLKEQNKIVKQQEKAAKRKKEKDAA) form a coiled coil. The span at 76–88 (KEQNKIVKQQEKA) shows a compositional bias: basic and acidic residues. A CP-type G domain is found at 133–319 (CQELNKVIEA…MIDSPGILAA (187 aa)). Residues 181–184 (NKID), 268–275 (GFPNVGKS), and 312–315 (DSPG) each bind GTP. Residues 486 to 532 (ATTTDAEEEKMDTTTNTDEPEAESHISSTVEPIQEPTEKRKDKPAKE) are disordered. Positions 521-532 (PTEKRKDKPAKE) are enriched in basic and acidic residues.

It belongs to the TRAFAC class YlqF/YawG GTPase family.

Its subcellular location is the nucleus. The protein resides in the nucleolus. Functionally, may play a role in regulating cellular proliferation. The protein is Guanine nucleotide-binding protein-like 3 (gnl3) of Danio rerio (Zebrafish).